We begin with the raw amino-acid sequence, 189 residues long: dCTP deaminase, dUMP-forming (189 aa).

Residues 101-106, Asp119, 127-129, Gln148, Tyr162, and Gln174 each bind dCTP; these read KSSLGR and TLE. Glu129 functions as the Proton donor/acceptor in the catalytic mechanism. A disordered region spans residues 163-189; it reads GSSEAGSKYQGQRGPTPSKAYLNFNRS.

This sequence belongs to the dCTP deaminase family. As to quaternary structure, homotrimer.

The catalysed reaction is dCTP + 2 H2O = dUMP + NH4(+) + diphosphate. It participates in pyrimidine metabolism; dUMP biosynthesis; dUMP from dCTP: step 1/1. In terms of biological role, bifunctional enzyme that catalyzes both the deamination of dCTP to dUTP and the hydrolysis of dUTP to dUMP without releasing the toxic dUTP intermediate. The polypeptide is dCTP deaminase, dUMP-forming (Rhodococcus erythropolis (strain PR4 / NBRC 100887)).